The sequence spans 223 residues: MDSTTLVYADLNLARIQEPKHDSPPSLSPDTCRCPRWHRLALKFGCAGLILLVLVVIGLCVLVLSVQKSSVQKICADVQENRTHTTGCSAKLECPQDWLSHRDKCFHVSQVSNTWKECRIDCDKKGATLLLIQDQEELRFLLDSIKEKYNSFWIGLSYTLTDMNWKWINGTAFNSDVLKITGVTENGSCAAISGEKVTSEGCSSDNRWICQKELNHETPCNDS.

Residues 1-43 (MDSTTLVYADLNLARIQEPKHDSPPSLSPDTCRCPRWHRLALK) are Cytoplasmic-facing. Residues 6–11 (LVYADL) carry the ITIM motif motif. The LCK-binding motif motif lies at 32–35 (CRCP). The chain crosses the membrane as a helical; Signal-anchor for type II membrane protein span at residues 44–64 (FGCAGLILLVLVVIGLCVLVL). Over 65-223 (SVQKSSVQKI…LNHETPCNDS (159 aa)) the chain is Extracellular. The C-type lectin domain maps to 101–211 (HRDKCFHVSQ…CSSDNRWICQ (111 aa)). Disulfide bonds link C122–C210 and C189–C202.

Homodimer; disulfide-linked. Interacts with tyrosine kinase LCK. Binds PTPN6/SHP-1 in a phosphorylation-dependent manner. As to expression, expressed in NK cells and a subset of T-cells.

It is found in the membrane. Its function is as follows. Receptor for CLEC2D/OCIL. Ligand-binding contributes to inhibition of cytotoxic natural killer (NK) cells. May mediate MHC class I-independent 'missing-self' recognition of allografts, tumor cells and virus-infected cells. This is Killer cell lectin-like receptor subfamily B member 1B allele B (Klrb1b) from Mus musculus (Mouse).